A 64-amino-acid polypeptide reads, in one-letter code: Bactridin-2 (64 aa).

The region spanning 1–63 (KDGYLVGNDG…TWNRATNRCG (63 aa)) is the LCN-type CS-alpha/beta domain. 4 disulfide bridges follow: C11/C62, C15/C37, C23/C43, and C27/C45.

Belongs to the long (4 C-C) scorpion toxin superfamily. Sodium channel inhibitor family. Beta subfamily. Expressed by the venom gland.

It localises to the secreted. Functionally, shows antibacterial activity against both Gram-positive bacteria (B.subtilis, M.luteus, E.faecalis) and Gram-negative bacteria (P.aeruginosa, Y.enterocolitica, A.calcoaceticus). Modifies membrane sodium permeability on Y.enterocolitica. Is toxic to mice, but is not to crabs. Induces concentration dependent haemolysis in human erythrocytes. Acts by inhibiting the sodium (Nav) currents. The sequence is that of Bactridin-2 from Tityus discrepans (Venezuelan scorpion).